A 132-amino-acid chain; its full sequence is Putative holo-[acyl-carrier-protein] synthase (132 aa).

Mg(2+) contacts are provided by Asp6 and Glu67.

Belongs to the P-Pant transferase superfamily. AcpS family.

It catalyses the reaction apo-[ACP] + CoA = holo-[ACP] + adenosine 3',5'-bisphosphate + H(+). In terms of biological role, transfers the 4'-phosphopantetheine moiety from coenzyme A to a Ser of acyl-carrier-protein. This is Putative holo-[acyl-carrier-protein] synthase (new8) from Schizosaccharomyces pombe (strain 972 / ATCC 24843) (Fission yeast).